The chain runs to 140 residues: Holo-[acyl-carrier-protein] synthase (140 aa).

Mg(2+) is bound by residues Asp-9 and Glu-63.

The protein belongs to the P-Pant transferase superfamily. AcpS family. The cofactor is Mg(2+).

It localises to the cytoplasm. The enzyme catalyses apo-[ACP] + CoA = holo-[ACP] + adenosine 3',5'-bisphosphate + H(+). Functionally, transfers the 4'-phosphopantetheine moiety from coenzyme A to a Ser of acyl-carrier-protein. The protein is Holo-[acyl-carrier-protein] synthase of Paraburkholderia phytofirmans (strain DSM 17436 / LMG 22146 / PsJN) (Burkholderia phytofirmans).